The chain runs to 541 residues: Eukaryotic translation initiation factor 3 subunit D-1 (541 aa).

The interval 98–136 (VQKPPHQRGRFRNMRGRGGRGRNPRGGLNNHHHHGMTTL) is disordered. Positions 100 to 120 (KPPHQRGRFRNMRGRGGRGRN) are enriched in basic residues.

The protein belongs to the eIF-3 subunit D family. As to quaternary structure, component of the eukaryotic translation initiation factor 3 (eIF-3) complex. The eIF-3 complex interacts with pix.

Its subcellular location is the cytoplasm. MRNA cap-binding component of the eukaryotic translation initiation factor 3 (eIF-3) complex, which is involved in protein synthesis of a specialized repertoire of mRNAs and, together with other initiation factors, stimulates binding of mRNA and methionyl-tRNAi to the 40S ribosome. The eIF-3 complex specifically targets and initiates translation of a subset of mRNAs involved in cell proliferation. In the eIF-3 complex, eif3d specifically recognizes and binds the 7-methylguanosine cap of a subset of mRNAs. The polypeptide is Eukaryotic translation initiation factor 3 subunit D-1 (Drosophila persimilis (Fruit fly)).